We begin with the raw amino-acid sequence, 232 residues long: Putative quercetin 2,3-dioxygenase PA1210 (232 aa).

The a divalent metal cation site is built by His-57, His-59, His-101, and Glu-103.

Belongs to the pirin family. It depends on a divalent metal cation as a cofactor.

The enzyme catalyses quercetin + O2 = 2-(3,4-dihydroxybenzoyloxy)-4,6-dihydroxybenzoate + CO. It participates in flavonoid metabolism; quercetin degradation. Functionally, putative quercetin 2,3-dioxygenase. This is Putative quercetin 2,3-dioxygenase PA1210 from Pseudomonas aeruginosa (strain ATCC 15692 / DSM 22644 / CIP 104116 / JCM 14847 / LMG 12228 / 1C / PRS 101 / PAO1).